A 187-amino-acid chain; its full sequence is UPF0301 protein SG2023 (187 aa).

Belongs to the UPF0301 (AlgH) family.

The polypeptide is UPF0301 protein SG2023 (Sodalis glossinidius (strain morsitans)).